Consider the following 331-residue polypeptide: Cytoskeleton protein RodZ (331 aa).

The Cytoplasmic segment spans residues 1 to 111 (MNTEATQDHQ…LGKRRKKRDG (111 aa)). Residues 19 to 71 (LRHAREQLGLSQQAVAERLCLKVSTVRDIEDDKAPADLASTFLRGYIRSYARL) form the HTH cro/C1-type domain. Residues 30-49 (QQAVAERLCLKVSTVRDIED) constitute a DNA-binding region (H-T-H motif). The chain crosses the membrane as a helical; Signal-anchor for type II membrane protein span at residues 112-132 (WLMSFTWLVLFVVIGLSGAWW). Topologically, residues 133 to 331 (WQDHKAQQEE…TLNAESSPAQ (199 aa)) are periplasmic. The segment covering 146 to 166 (MADQSSAELNGGDANSQNVPL) has biased composition (polar residues). A disordered region spans residues 146 to 238 (MADQSSAELN…ASPLPTDQAN (93 aa)). 2 stretches are compositionally biased toward low complexity: residues 167-202 (DTSA…TPAD) and 216-234 (TAGT…PLPT).

This sequence belongs to the RodZ family.

It localises to the cell inner membrane. Its function is as follows. Cytoskeletal protein that is involved in cell-shape control through regulation of the length of the long axis. This chain is Cytoskeleton protein RodZ, found in Klebsiella pneumoniae subsp. pneumoniae (strain ATCC 700721 / MGH 78578).